The following is a 338-amino-acid chain: Ferrochelatase (338 aa).

Positions 202 and 283 each coordinate Fe cation.

It belongs to the ferrochelatase family.

The protein resides in the cytoplasm. It carries out the reaction heme b + 2 H(+) = protoporphyrin IX + Fe(2+). Its pathway is porphyrin-containing compound metabolism; protoheme biosynthesis; protoheme from protoporphyrin-IX: step 1/1. Catalyzes the ferrous insertion into protoporphyrin IX. This Acinetobacter baumannii (strain ATCC 17978 / DSM 105126 / CIP 53.77 / LMG 1025 / NCDC KC755 / 5377) protein is Ferrochelatase.